Consider the following 353-residue polypeptide: Probable peptidoglycan glycosyltransferase FtsW (353 aa).

8 consecutive transmembrane segments (helical) span residues 26-46 (IFYF…PMSF), 53-73 (LILI…KSVH), 115-135 (FWGF…LLAE), 137-157 (DLGT…LSGV), 162-182 (FFII…FEPY), 242-262 (IIGE…IFFI), 288-308 (IGLW…GILP), and 314-334 (LPLI…ICIL).

The protein belongs to the SEDS family. FtsW subfamily.

It localises to the cell inner membrane. It catalyses the reaction [GlcNAc-(1-&gt;4)-Mur2Ac(oyl-L-Ala-gamma-D-Glu-L-Lys-D-Ala-D-Ala)](n)-di-trans,octa-cis-undecaprenyl diphosphate + beta-D-GlcNAc-(1-&gt;4)-Mur2Ac(oyl-L-Ala-gamma-D-Glu-L-Lys-D-Ala-D-Ala)-di-trans,octa-cis-undecaprenyl diphosphate = [GlcNAc-(1-&gt;4)-Mur2Ac(oyl-L-Ala-gamma-D-Glu-L-Lys-D-Ala-D-Ala)](n+1)-di-trans,octa-cis-undecaprenyl diphosphate + di-trans,octa-cis-undecaprenyl diphosphate + H(+). Its pathway is cell wall biogenesis; peptidoglycan biosynthesis. Peptidoglycan polymerase that is essential for cell division. This is Probable peptidoglycan glycosyltransferase FtsW from Buchnera aphidicola subsp. Schizaphis graminum (strain Sg).